Reading from the N-terminus, the 437-residue chain is Enolase 2 (437 aa).

Residues H160 and E169 each coordinate substrate. The Proton donor role is filled by E212. 3 residues coordinate Mg(2+): D247, E296, and D321. Substrate is bound by residues E296 and D321. Catalysis depends on K346, which acts as the Proton acceptor. Substrate is bound by residues 373 to 376 (SHRS) and K397.

Belongs to the enolase family. In terms of assembly, homodimer. It depends on Mg(2+) as a cofactor.

The protein resides in the cytoplasm. The enzyme catalyses (2R)-2-phosphoglycerate = phosphoenolpyruvate + H2O. It functions in the pathway carbohydrate degradation; glycolysis; pyruvate from D-glyceraldehyde 3-phosphate: step 4/5. The chain is Enolase 2 (ENO2) from Candida glabrata (strain ATCC 2001 / BCRC 20586 / JCM 3761 / NBRC 0622 / NRRL Y-65 / CBS 138) (Yeast).